We begin with the raw amino-acid sequence, 408 residues long: RNA-splicing ligase RtcB (408 aa).

Mn(2+)-binding residues include Asp-75, Cys-78, His-168, His-185, and His-281. Residue 167-171 participates in GMP binding; that stretch reads NHFIE. GMP is bound by residues 281-282, 313-316, Ser-320, 337-340, and Lys-407; these read HN, PGSM, and HGAG. Catalysis depends on His-337, which acts as the GMP-histidine intermediate.

It belongs to the RtcB family. In terms of assembly, monomer. Mn(2+) serves as cofactor.

It carries out the reaction a 3'-end 3'-phospho-ribonucleotide-RNA + a 5'-end dephospho-ribonucleoside-RNA + GTP = a ribonucleotidyl-ribonucleotide-RNA + GMP + diphosphate. It catalyses the reaction a 3'-end 2',3'-cyclophospho-ribonucleotide-RNA + a 5'-end dephospho-ribonucleoside-RNA + GTP + H2O = a ribonucleotidyl-ribonucleotide-RNA + GMP + diphosphate + H(+). Its function is as follows. GTP-dependent RNA ligase that is involved in RNA repair. Joins RNA with 2',3'-cyclic-phosphate or 3'-phosphate ends to RNA with 5'-hydroxy ends. Also acts as a DNA ligase in case of DNA damage by splicing 'dirty' DNA breaks, characterized by 3'-phosphate (or cyclic-phosphate) and 5'-hydroxy ends that cannot be sealed by classical DNA ligases. Repairs tRNA cleaved by colicins D or E5, does not repair damaged 16S rRNA. Functionally, able to catalyze tRNA splicing in vivo in yeast, but bacteria are not known to splice tRNA. This is RNA-splicing ligase RtcB from Escherichia coli (strain K12).